The sequence spans 906 residues: Ribonucleoside-diphosphate reductase large subunit-like protein (906 aa).

Disordered regions lie at residues 1-70 (MNPA…AGNT) and 89-129 (VSWR…LSTF). A compositionally biased stretch (polar residues) spans 98–109 (PDGTPSVLSLTR).

It belongs to the ribonucleoside diphosphate reductase large chain family.

It localises to the virion. The protein resides in the host cytoplasm. Its function is as follows. Does not possess a ribonucleotide reductase activity. Betaherpesviruses probably use another strategy to expand the dNTP pool in a quiescent host cell. In Homo sapiens (Human), this protein is Ribonucleoside-diphosphate reductase large subunit-like protein.